The primary structure comprises 355 residues: MSRFRKTLVSAFVLCLVIFPLLVSAAEEENQCGGSKGGSAAEKASALKYKIIAFFSILIAGVFGVCLPIFGLKTESNFFMYVKAFAAGVILATGFVHILPDATESLTSSCLGEEPPWGDFPMTGLVAMAASILTMLIESFASGYLNRSRLAKEGKTLPVSTGGEEEHAHTGSAHTHASQGHSHGSLLIPQDDDHIDMRKKIVTQILELGIVVHSVIIGISLGASPSVSTIKPLIAAITFHQLFEGFGLGGCISEAKFRVKKIWVMLMFFALTAPIGIGIGIGVAEIYNENSPMALKVSGFLNATASGILIYMALVDLVAPLFMNQKTQSSMKIQVACSVSLVVGAGLMSLLAIWA.

The first 25 residues, 1 to 25, serve as a signal peptide directing secretion; it reads MSRFRKTLVSAFVLCLVIFPLLVSA. Over 26 to 50 the chain is Extracellular; that stretch reads AEEENQCGGSKGGSAAEKASALKYK. Residues 51–71 traverse the membrane as a helical segment; the sequence is IIAFFSILIAGVFGVCLPIFG. Over 72-77 the chain is Cytoplasmic; that stretch reads LKTESN. Residues 78–98 traverse the membrane as a helical segment; sequence FFMYVKAFAAGVILATGFVHI. Residues 99-116 are Extracellular-facing; that stretch reads LPDATESLTSSCLGEEPP. Residues 117–137 traverse the membrane as a helical segment; the sequence is WGDFPMTGLVAMAASILTMLI. The Cytoplasmic portion of the chain corresponds to 138–200; the sequence is ESFASGYLNR…DDDHIDMRKK (63 aa). Residues 156 to 183 are disordered; sequence TLPVSTGGEEEHAHTGSAHTHASQGHSH. A helical membrane pass occupies residues 201 to 221; sequence IVTQILELGIVVHSVIIGISL. Residues 222 to 231 lie on the Extracellular side of the membrane; sequence GASPSVSTIK. A helical membrane pass occupies residues 232-252; sequence PLIAAITFHQLFEGFGLGGCI. Residues 253–261 are Cytoplasmic-facing; sequence SEAKFRVKK. The chain crosses the membrane as a helical span at residues 262–282; sequence IWVMLMFFALTAPIGIGIGIG. The Extracellular segment spans residues 283 to 302; sequence VAEIYNENSPMALKVSGFLN. A helical membrane pass occupies residues 303-323; that stretch reads ATASGILIYMALVDLVAPLFM. The Cytoplasmic segment spans residues 324-334; sequence NQKTQSSMKIQ. A helical transmembrane segment spans residues 335 to 355; the sequence is VACSVSLVVGAGLMSLLAIWA.

The protein belongs to the ZIP transporter (TC 2.A.5) family.

The protein localises to the cell membrane. Its function is as follows. Zinc transporter involved in zinc uptake in roots. Targeted by BZIP23 transcription factor in response to zinc-deficient conditions. The polypeptide is Probable zinc transporter 12 (ZIP12) (Arabidopsis thaliana (Mouse-ear cress)).